The sequence spans 366 residues: ADP-ribosylarginine hydrolase Tri1 (366 aa).

An N-terminal extension region spans residues 1 to 65 (MIDLREDTWT…LNTPPCLIPE (65 aa)). Residues 74 to 366 (GALVGLAIGD…LFYMAPEEDF (293 aa)) form an ADP-ribosyl hydrolase domain region. Residues threonine 116, aspartate 117, aspartate 118, aspartate 161, and aspartate 317 each contribute to the Mg(2+) site.

This sequence belongs to the ADP-ribosylglycohydrolase family. Forms a stable complex with cognate effector protein Tre1-Sp. It depends on Mg(2+) as a cofactor.

It carries out the reaction N(omega)-(ADP-D-ribosyl)-L-arginyl-[protein] + H2O = ADP-D-ribose + L-arginyl-[protein]. Functionally, immunity component of a contact-dependent interbacterial competition system (also called effector-immunity systems). Acts as an arginine mono-ADP-ribosylhydrolase, mediating the removal of mono-ADP-ribose attached to arginine residues on proteins. De-ADP-ribosylates FtsZ, is able to act on other proteins as well. Neutralizes the toxic activity of cognate toxin Tre1-Sp. Expression of this protein alone in E.coli partially protects the cells against competition by wild-type S.proteamaculans. Neutralizes Tre1-Sp both by occluding its active site via its N-terminal extension and by hydrolyzing the ADP-ribosyl moiety from FtsZ; the 2 activities are dissociable by mutagenesis. The chain is ADP-ribosylarginine hydrolase Tri1 from Serratia proteamaculans (strain 568).